Reading from the N-terminus, the 423-residue chain is Adenylosuccinate synthetase (423 aa).

GTP-binding positions include G12 to K18 and G40 to T42. The active-site Proton acceptor is D13. Mg(2+) is bound by residues D13 and G40. IMP is bound by residues D13 to K16, N38 to H41, T129, R143, Q221, T236, and R300. The active-site Proton donor is the H41. A296–R302 is a substrate binding site. Residues R302, K328–D330, and S408–G410 each bind GTP.

This sequence belongs to the adenylosuccinate synthetase family. In terms of assembly, homodimer. Requires Mg(2+) as cofactor.

It is found in the cytoplasm. It carries out the reaction IMP + L-aspartate + GTP = N(6)-(1,2-dicarboxyethyl)-AMP + GDP + phosphate + 2 H(+). It functions in the pathway purine metabolism; AMP biosynthesis via de novo pathway; AMP from IMP: step 1/2. Plays an important role in the de novo pathway of purine nucleotide biosynthesis. Catalyzes the first committed step in the biosynthesis of AMP from IMP. The protein is Adenylosuccinate synthetase of Phocaeicola vulgatus (strain ATCC 8482 / DSM 1447 / JCM 5826 / CCUG 4940 / NBRC 14291 / NCTC 11154) (Bacteroides vulgatus).